A 371-amino-acid polypeptide reads, in one-letter code: Probable beta-1,3-galactosyltransferase 12 (371 aa).

The segment at 1–36 (MPLFSHRFTTASSSSPASPSYYNKPSSKTHKPNSSS) is disordered. Low complexity predominate over residues 11–36 (ASSSSPASPSYYNKPSSKTHKPNSSS). The helical; Signal-anchor for type II membrane protein transmembrane segment at 46-66 (VAIIFFSLVSVFIGVAGTIFA) threads the bilayer. Asn291 carries an N-linked (GlcNAc...) asparagine glycan.

Belongs to the glycosyltransferase 31 family. Mn(2+) serves as cofactor.

It localises to the golgi apparatus membrane. It functions in the pathway protein modification; protein glycosylation. Its function is as follows. Beta-1,3-galactosyltransferase that transfers galactose from UDP-galactose to substrates with a terminal glycosyl residue. The chain is Probable beta-1,3-galactosyltransferase 12 (B3GALT12) from Arabidopsis thaliana (Mouse-ear cress).